The following is a 755-amino-acid chain: Xaa-Pro dipeptidyl-peptidase (755 aa).

Residues Ser348, Asp468, and His498 each act as charge relay system in the active site.

This sequence belongs to the peptidase S15 family. In terms of assembly, homodimer.

It localises to the cytoplasm. It catalyses the reaction Hydrolyzes Xaa-Pro-|- bonds to release unblocked, N-terminal dipeptides from substrates including Ala-Pro-|-p-nitroanilide and (sequentially) Tyr-Pro-|-Phe-Pro-|-Gly-Pro-|-Ile.. Its function is as follows. Removes N-terminal dipeptides sequentially from polypeptides having unsubstituted N-termini provided that the penultimate residue is proline. The sequence is that of Xaa-Pro dipeptidyl-peptidase from Streptococcus thermophilus (strain CNRZ 1066).